The chain runs to 798 residues: Protocadherin beta-10 (798 aa).

The first 26 residues, 1–26, serve as a signal peptide directing secretion; that stretch reads MAVRELCFSRQRQVLFLFLFWGVSLA. The Extracellular portion of the chain corresponds to 27 to 690; the sequence is GSGFGRYSVT…AQADLLTVYL (664 aa). 5 consecutive Cadherin domains span residues 35-133, 138-242, 247-347, 352-451, and 456-561; these read VTEE…APVF, TVLK…APQF, YETQ…PPEL, FSNS…APAF, and YTLF…SPFV. Asn169 is a glycosylation site (N-linked (GlcNAc...) asparagine). 2 N-linked (GlcNAc...) asparagine glycosylation sites follow: Asn418 and Asn436. Residue Asn567 is glycosylated (N-linked (GlcNAc...) asparagine). The 104-residue stretch at 568-671 folds into the Cadherin 6 domain; that stretch reads GSAPCTELVP…LVDGFSQPYL (104 aa). A helical transmembrane segment spans residues 691–711; it reads VVALASVSSLFLFSVLLFVAV. Topologically, residues 712-798 are cytoplasmic; the sequence is RLCRRSRAAS…FRNSFGFNIQ (87 aa).

Its subcellular location is the cell membrane. Its function is as follows. Potential calcium-dependent cell-adhesion protein. May be involved in the establishment and maintenance of specific neuronal connections in the brain. This Pan troglodytes (Chimpanzee) protein is Protocadherin beta-10 (PCDHB10).